The following is a 141-amino-acid chain: Large ribosomal subunit protein uL11 (141 aa).

This sequence belongs to the universal ribosomal protein uL11 family. In terms of assembly, part of the ribosomal stalk of the 50S ribosomal subunit. Interacts with L10 and the large rRNA to form the base of the stalk. L10 forms an elongated spine to which L12 dimers bind in a sequential fashion forming a multimeric L10(L12)X complex. Post-translationally, one or more lysine residues are methylated.

Functionally, forms part of the ribosomal stalk which helps the ribosome interact with GTP-bound translation factors. The sequence is that of Large ribosomal subunit protein uL11 from Clostridium tetani (strain Massachusetts / E88).